Here is a 144-residue protein sequence, read N- to C-terminus: Large ribosomal subunit protein uL13 (144 aa).

This sequence belongs to the universal ribosomal protein uL13 family. Part of the 50S ribosomal subunit.

Functionally, this protein is one of the early assembly proteins of the 50S ribosomal subunit, although it is not seen to bind rRNA by itself. It is important during the early stages of 50S assembly. The chain is Large ribosomal subunit protein uL13 from Natronomonas pharaonis (strain ATCC 35678 / DSM 2160 / CIP 103997 / JCM 8858 / NBRC 14720 / NCIMB 2260 / Gabara) (Halobacterium pharaonis).